A 292-amino-acid polypeptide reads, in one-letter code: Short chain dehydrogenases/reductase notP' (292 aa).

Residues 1–25 (MPQTSDGNVHAPQYREAKPSQGDPS) form a disordered region. The NADP(+) site is built by Leu-48, Asp-97, Lys-158, Tyr-193, Lys-197, Ile-230, and Thr-232. Catalysis depends on Tyr-193, which acts as the Proton donor. The active-site Lowers pKa of active site Tyr is Lys-197.

This sequence belongs to the short-chain dehydrogenases/reductases (SDR) family.

Short chain dehydrogenases/reductase; part of the gene cluster that mediates the biosynthesis of notoamide, a fungal indole alkaloid that belongs to a family of natural products containing a characteristic bicyclo[2.2.2]diazaoctane core. The first step of notoamide biosynthesis involves coupling of L-proline and L-tryptophan by the bimodular NRPS notE', to produce cyclo-L-tryptophan-L-proline called brevianamide F. The reverse prenyltransferase notF' then acts as a deoxybrevianamide E synthase and converts brevianamide F to deoxybrevianamide E via reverse prenylation at C-2 of the indole ring leading to the bicyclo[2.2.2]diazaoctane core. Deoxybrevianamide E is further hydroxylated at C-6 of the indole ring, likely catalyzed by the cytochrome P450 monooxygenase notG', to yield 6-hydroxy-deoxybrevianamide E. 6-hydroxy-deoxybrevianamide E is a specific substrate of the prenyltransferase notC' for normal prenylation at C-7 to produce 6-hydroxy-7-prenyl-deoxybrevianamide, also called notoamide S. As the proposed pivotal branching point in notoamide biosynthesis, notoamide S can be diverted to notoamide E through an oxidative pyran ring closure putatively catalyzed by either notH' cytochrome P450 monooxygenase or the notD' FAD-linked oxidoreductase. This step would be followed by an indole 2,3-epoxidation-initiated pinacol-like rearrangement catalyzed by the notB' FAD-dependent monooxygenase leading to the formation of notoamide C and notoamide D. On the other hand notoamide S is converted to notoamide T by notH' (or notD'), a bifunctional oxidase that also functions as the intramolecular Diels-Alderase responsible for generation of (-)-notoamide T. To generate antipodal (+)-notoaminide T, notH (or notD) in Aspergillus strain MF297-2 is expected to catalyze a Diels-Alder reaction leading to the opposite stereochemistry. The remaining oxidoreductase notD' (or notH') likely catalyzes the oxidative pyran ring formation to yield (-)-stephacidin A. The FAD-dependent monooxygenase notI' is highly similar to notB' and is predicted to catalyze a similar conversion from (-)-stephacidin A to (+)-notoamide B via the 2,3-epoxidation of (-)-stephacidin A followed by a pinacol-type rearrangement. Finally, it remains unclear which enzyme could be responsible for the final hydroxylation steps leading to notoamide A and sclerotiamide. The function of notP' in the notoamide biosynthesis has not been determined yet. This chain is Short chain dehydrogenases/reductase notP', found in Aspergillus versicolor.